The following is a 312-amino-acid chain: Methionyl-tRNA formyltransferase (312 aa).

109–112 (SLLP) contributes to the (6S)-5,6,7,8-tetrahydrofolate binding site.

It belongs to the Fmt family.

The catalysed reaction is L-methionyl-tRNA(fMet) + (6R)-10-formyltetrahydrofolate = N-formyl-L-methionyl-tRNA(fMet) + (6S)-5,6,7,8-tetrahydrofolate + H(+). In terms of biological role, attaches a formyl group to the free amino group of methionyl-tRNA(fMet). The formyl group appears to play a dual role in the initiator identity of N-formylmethionyl-tRNA by promoting its recognition by IF2 and preventing the misappropriation of this tRNA by the elongation apparatus. The polypeptide is Methionyl-tRNA formyltransferase (Ruminiclostridium cellulolyticum (strain ATCC 35319 / DSM 5812 / JCM 6584 / H10) (Clostridium cellulolyticum)).